The chain runs to 490 residues: Cytochrome P450 2C13, male-specific (490 aa).

Position 435 (Cys-435) interacts with heme.

It belongs to the cytochrome P450 family. Heme serves as cofactor. As to expression, liver, and to a lesser extent in prostate, kidney, heart and brain.

The protein resides in the endoplasmic reticulum membrane. Its subcellular location is the microsome membrane. It carries out the reaction an organic molecule + reduced [NADPH--hemoprotein reductase] + O2 = an alcohol + oxidized [NADPH--hemoprotein reductase] + H2O + H(+). Functionally, cytochromes P450 are a group of heme-thiolate monooxygenases. In liver microsomes, this enzyme is involved in an NADPH-dependent electron transport pathway. It oxidizes a variety of structurally unrelated compounds, including steroids, fatty acids, and xenobiotics. The chain is Cytochrome P450 2C13, male-specific (Cyp2c13) from Rattus norvegicus (Rat).